Consider the following 290-residue polypeptide: RxLR effector protein Avr4 (290 aa).

The first 24 residues, 1–24 (MRSLHILLVITASLLASLAVSAEA), serve as a signal peptide directing secretion. A disordered region spans residues 33–56 (VVENNKDKSRFLRDGGTTEAQTDE). The segment covering 36-45 (NNKDKSRFLR) has biased composition (basic and acidic residues). The RxLR-dEER motif lies at 42-58 (RFLRDGGTTEAQTDEER). Residues 118 to 141 (KYERMQWQKLNEGQTLTYMRVGDR) form a W1 motif region. The W2 motif stretch occupies residues 151 to 174 (QLLRWVAQKKTVKSVYDDLQIEGF). A W3 motif region spans residues 224–247 (VFEKWAMEGTHIKSVIKTLNLNNK). The N-linked (GlcNAc...) asparagine glycan is linked to asparagine 246. Residues 249–270 (ASEMANNENFPALLKYVKLYLD) form a y motif region.

It belongs to the RxLR effector family.

It is found in the secreted. The protein localises to the host cytoplasm. The protein resides in the host nucleus. It localises to the host nucleolus. Its subcellular location is the host cytoskeleton. Its function is as follows. Secreted effector that acts as an elicitor of hypersensitive response (HR) specifically on plants carrying defense protein R4, through its interaction with this protein. The polypeptide is RxLR effector protein Avr4 (Phytophthora mirabilis).